We begin with the raw amino-acid sequence, 379 residues long: Stimulator of interferon genes protein (379 aa).

At 1–17 (MPYSNLHPSIPRPRSYR) the chain is on the cytoplasmic side. Positions 1–190 (MPYSNLHPSI…MFNQLHNNML (190 aa)) are mediates interaction with ZDHHC1 and ZDHHC11. Residues 18–34 (FKLAAFVLLVGSLMSLW) traverse the membrane as a helical segment. At 35–44 (MTGEPPSHTL) the chain is on the lumenal side. A helical transmembrane segment spans residues 45–69 (HYLALHVASQQLGLLLKKLCCLAEE). Over 70 to 91 (LCHVQSRYQGSYWKAVRACVGS) the chain is Cytoplasmic. Residue Cys-88 is the site of S-palmitoyl cysteine attachment. A helical transmembrane segment spans residues 92–106 (PICFMALILLSFYFY). Residues 107-116 (CSLENTSDLR) lie on the Lumenal side of the membrane. The chain crosses the membrane as a helical span at residues 117 to 134 (LAWHLGILVLSKSLSMTL). Topologically, residues 135 to 379 (DLQSLAPAEV…QPLPLRTDLI (245 aa)) are cytoplasmic. Lys-151 participates in a covalent cross-link: Glycyl lysine isopeptide (Lys-Gly) (interchain with G-Cter in ubiquitin). The cyclic dinucleotide-binding domain (CBD) stretch occupies residues 153-340 (FNVAHGLAWS…RHIRQEEKEE (188 aa)). Residue 162–167 (SYYIGY) coordinates 2',3'-cGAMP. Gly-166 contacts 3',3'-c-di-GMP. 2',3'-cUAMP is bound at residue Tyr-167. Lys-236 participates in a covalent cross-link: Glycyl lysine isopeptide (Lys-Gly) (interchain with G-Cter in ubiquitin). Arg-238 serves as a coordination point for 2',3'-cUAMP. Residues 238–241 (RAYS) and Thr-263 each bind 2',3'-cGAMP. Residues 238–241 (RAYS) and Thr-263 each bind 3',3'-c-di-GMP. Residue Ser-241 is modified to Phosphoserine. Thr-263 is a binding site for 2',3'-cUAMP. Lys-338 participates in a covalent cross-link: Glycyl lysine isopeptide (Lys-Gly) (interchain with G-Cter in SUMO). Positions 340-379 (EVTMSGPPTSVAPRPSLLSQEPRLLISGMEQPLPLRTDLI) are C-terminal tail (CTT). At Ser-355 the chain carries Phosphoserine. Phosphoserine; by TBK1 occurs at positions 358 and 366. Residues 363–366 (LLIS) carry the pLxIS motif motif.

Belongs to the STING family. In terms of assembly, homodimer; forms a homodimer in absence of cyclic nucleotide (c-di-GMP or cGAMP); 'Lys-63'-linked ubiquitination at Lys-151 is required for homodimerization. Homotetramer; in presence of cyclic nucleotide (c-di-GMP or cGAMP), forms tetramers and higher-order oligomers through side-by-side packing. Interacts (when phosphorylated) with IRF3; following activation and phosphorylation on the pLxIS motif by TBK1, recruits IRF3. Interacts with RIGI, MAVS and SSR2. Interacts with RNF5 and TRIM56. Interacts with TBK1; when homodimer, leading to subsequent production of IFN-beta. Interacts with IFIT1 and IFIT2. Interacts with TRIM29; this interaction induces STING1 ubiquitination and subsequent degradation. Associates with the MHC-II complex. Interacts with STEEP1; interaction takes place upon cGAMP-activation and STING1 phosphorylation by MAP3K7/TAK1 and promotes STING1 translocation to COPII vesicles. Interacts with SEC24A, SEC24B and SEC24C; promoting translocation to COPII vesicles. Interacts (when ubiquitinated) with SQSTM1; leading to relocalization to autophagosomes. Interacts with SURF4. Interacts with HNRNPA2B1. Interacts with ZDHHC1; ZDHHC1 constitutively interacts with STING1 and in presence of DNA viruses activates it by promoting its cGAMP-induced oligomerization and the recruitment of downstream signaling components. Interacts with ZDHHC11; in presence of DNA viruses promotes the recruitment of IRF3 to STING1. Interacts with TOMM70. Interacts with TAB1; promoting recruitment of TAB1 to the endoplasmic reticulum membrane and subsequent activation of MAP3K7/TAK1. Interacts (via transmembrane domain) with TMEM203. Interacts with DDX41. Post-translationally, phosphorylation by TBK1 leads to activation and production of IFN-beta. Following cyclic nucleotide (c-di-GMP or cGAMP)-binding, activation and translocation from the endoplasmic reticulum, STING1 is phosphorylated by TBK1 at Ser-366 in the pLxIS motif. The phosphorylated pLxIS motif constitutes an IRF3-binding motif, leading to recruitment of the transcription factor IRF3 to induce type-I interferons and other cytokines. Phosphorylated on tyrosine residues upon MHC-II aggregation. Dephosphorylation by PPP6C leads to inactivation and decreased production of IFN-beta. Phosphorylation at Ser-358 is also required to activate IRF3. Phosphorylation at Ser-355 by MAP3K7/TAK1 facilitates its interaction with STEEP1, promoting STING1 translocation to COPII vesicles. Ubiquitinated. Ubiquitinated via 'Lys-63'-linked ubiquitin chains in response to double-stranded DNA treatment, leading to relocalization to autophagosomes and subsequent degradation; this process is dependent on SQSTM1. 'Lys-63'-linked ubiquitination mediated by TRIM56 at Lys-151 promotes homodimerization and recruitment of the antiviral kinase TBK1 and subsequent production of IFN-beta. 'Lys-48'-linked polyubiquitination at Lys-151 occurring after viral infection is mediated by RNF5 and leads to proteasomal degradation. 'Lys-11'-linked polyubiquitination at Lys-151 by RNF26 leads to stabilize STING1: it protects STING1 from RNF5-mediated 'Lys-48'-linked polyubiquitination. 'Lys-33'-linked and 'Lys-48'-linked deubiquitinated by USP20; leading to its stabilization and promotion of innate antiviral response. 'Lys-48'-linked deubiquitinated by USP44; leading to its stabilization and promotion of innate antiviral response. Deubiquitinated by USP13; leading to inhibition of innate antiviral response. 'Lys-63'-linked deubiquitinated by USP49; leading to inhibition of the subsequent recruitment of TBK1 to the signaling complex. 'Lys-63'-linked ubiquitination mediated by RNF39 promotes the activation of the cGAS-STING pathway. In terms of processing, sumoylated at Lys-338 by TRIM38 during the early phase of viral infection, promoting its stability by preventing its relocalization to autophagosomes and subsequent degradation. Desumoylated by SENP2 during the late phase of viral infection. Post-translationally, palmitoylation takes place in the Golgi apparatus and creates a platform for the recruitment of TBK1.

The protein resides in the endoplasmic reticulum membrane. It is found in the cytoplasm. Its subcellular location is the perinuclear region. It localises to the endoplasmic reticulum-Golgi intermediate compartment membrane. The protein localises to the golgi apparatus membrane. The protein resides in the cytoplasmic vesicle. It is found in the autophagosome membrane. Its subcellular location is the mitochondrion outer membrane. It localises to the cell membrane. The catalysed reaction is H(+)(in) = H(+)(out). With respect to regulation, in contrast to mouse protein, not activated by anticancer molecule 5,6-dimethylxanthenone 4-acetic acid (DMXAA). In terms of biological role, facilitator of innate immune signaling that acts as a sensor of cytosolic DNA from bacteria and viruses and promotes the production of type I interferon (IFN-alpha and IFN-beta). Innate immune response is triggered in response to non-CpG double-stranded DNA from viruses and bacteria delivered to the cytoplasm. Acts by binding cyclic dinucleotides: recognizes and binds cyclic di-GMP (c-di-GMP), a second messenger produced by bacteria, cyclic UMP-AMP (2',3'-cUAMP), and cyclic GMP-AMP (cGAMP), a messenger produced by CGAS in response to DNA virus in the cytosol. Upon binding to c-di-GMP, cUAMP or cGAMP, STING1 oligomerizes, translocates from the endoplasmic reticulum and is phosphorylated by TBK1 on the pLxIS motif, leading to recruitment and subsequent activation of the transcription factor IRF3 to induce expression of type I interferon and exert a potent anti-viral state. Exhibits 2',3' phosphodiester linkage-specific ligand recognition: can bind both 2'-3' linked cGAMP (2'-3'-cGAMP) and 3'-3' linked cGAMP but is preferentially activated by 2'-3' linked cGAMP. The preference for 2'-3'-cGAMP, compared to other linkage isomers is probably due to the ligand itself, whichs adopts an organized free-ligand conformation that resembles the STING1-bound conformation and pays low energy costs in changing into the active conformation. In addition to promote the production of type I interferons, plays a direct role in autophagy. Following cGAMP-binding, STING1 buds from the endoplasmic reticulum into COPII vesicles, which then form the endoplasmic reticulum-Golgi intermediate compartment (ERGIC). The ERGIC serves as the membrane source for WIPI2 recruitment and LC3 lipidation, leading to formation of autophagosomes that target cytosolic DNA or DNA viruses for degradation by the lysosome. Promotes autophagy by acting as a proton channel that directs proton efflux from the Golgi to facilitate MAP1LC3B/LC3B lipidation. The autophagy- and interferon-inducing activities can be uncoupled and autophagy induction is independent of TBK1 phosphorylation. Autophagy is also triggered upon infection by bacteria: following c-di-GMP-binding, which is produced by live Gram-positive bacteria, promotes reticulophagy. May be involved in translocon function, the translocon possibly being able to influence the induction of type I interferons. May be involved in transduction of apoptotic signals via its association with the major histocompatibility complex class II (MHC-II). The chain is Stimulator of interferon genes protein from Rattus norvegicus (Rat).